Here is a 428-residue protein sequence, read N- to C-terminus: Protein clpf-1 (428 aa).

ATP-binding positions include E16, R56, and 124–129 (DVGKTT).

This sequence belongs to the Clp1 family. Clp1 subfamily.

It is found in the nucleus. Its function is as follows. Required for endonucleolytic cleavage during polyadenylation-dependent pre-mRNA 3'-end formation. This Caenorhabditis elegans protein is Protein clpf-1.